The sequence spans 776 residues: Endonuclease MutS2 (776 aa).

330 to 337 (GPNTGGKT) contributes to the ATP binding site. Positions 701-776 (LDLRGMRYEE…GSGATIAILK (76 aa)) constitute a Smr domain.

This sequence belongs to the DNA mismatch repair MutS family. MutS2 subfamily. Homodimer. Binds to stalled ribosomes, contacting rRNA.

Endonuclease that is involved in the suppression of homologous recombination and thus may have a key role in the control of bacterial genetic diversity. Functionally, acts as a ribosome collision sensor, splitting the ribosome into its 2 subunits. Detects stalled/collided 70S ribosomes which it binds and splits by an ATP-hydrolysis driven conformational change. Acts upstream of the ribosome quality control system (RQC), a ribosome-associated complex that mediates the extraction of incompletely synthesized nascent chains from stalled ribosomes and their subsequent degradation. Probably generates substrates for RQC. The chain is Endonuclease MutS2 from Lactococcus lactis subsp. cremoris (strain SK11).